The following is a 1509-amino-acid chain: MDKSYNFSSSNLANSSGLHNSINSNNVNGVNNINNNNNNNNNNNNNNNNNNNNENVNNHNNVSNISNTHQQAKKKEKYNNNNNKNKPFFGEERHKDNATPDVQKTKIAKWRMRERMKTVSVALVLCLNIGVDPPDVIKTFPCARMECWFDPSTQPPQKALDLIGKTLQAQYEKWQSKARYKQSLDPTVEEVKKLCLSLRRNAKDERVLFHYNGHGVPKPTTNGEIWVFNRNFTQYIPLSIYELQTWMGTPSIYVFDCSAAGLIINWFNQFAEQRDKELERFSGNNQNNNQNNNQNSNQNNQNNTTNSTNGNTNGNNQQNNNNSNNNSSNNSNTNSPNMGSSNSVNNNQSGSSSSSSHQRDCILLAACSANEILPMNPDFPADMFTACLTTPIRIALRWFCSHSILTGITADMLDKIPGNLSSRRTPLGELNWIFTAVTDTIAWNVLPRHLFQKLFRQDLLVASLFRNYLLAERIMRSANCTPISCPRLPPTYQHAMWQAWDLAVDLVISQLPTLLADPNAEFKSSPFFTEQLTAFEVWLEFGSEHKDPPAQLPIVLQVLLSQAHRLRALVLLGKFLDLGPWAVNLALCVGIFPYVLKLLQSPAGDLRHILVFIWAKILALDKSCQLDLVKENGHAYFISVLSSPQIPADQRTMSAFVLSTICNNCRPGQNACLIGNLLPICLSQLNDPDPMVRRWMILCMAKMWENFEEAKWAAIKENAHEKLCLLLTDVSPEVRASAVVALGELIGGAEGSEQRTNIELNLALTLAVITADCSPMVRKELVISLSRIVSSYESNFVQVAQEIAQEERLRAVLEAKRLEESRKSKKRASVPKISDADHLNNNSDLYGNGSQSSVYGCLWKIILNLCTDPFDQVANRAQSIVKRISSKFSMEELMSHNLINRTNFNFNNLNGSMNGLNSSGSGFLNSSNGNLGASMNGSNLNSSNNNLGGSSGGGFGLNNSNSSIRNTFVNISRITNRDPRSPTKTKLGNQRSPILTSSTNNVGTNLNGNQLNLNNNNINNGNINNNNNNNSSINNNGNNINNNGNGNNNNINNNNGLGNQLANTFQSLSLSSGLGGNKTNKMSQSISSMNSSSQSLQNDFLMVSDSMPFEEDELYSDYYEWSCNYFSKPMMQSTGEDFESFESIEKKWKRQRNEMIIQESKEAVQNIIQQPPKSFSQMTIFAEPNGQPISHLQFHPFDNILVVSDGLENISVWNYDDGQRINTFNNCNMSGTRITSMKLVNDYDPSMIITAADDGVVRIWRGYESNDTLKMVSSWRAFPEFATTGNDPIGRLVLDWKGDSGLVLVSGETPDSPKIRIWDVERELGVQDIFIGTESVVTCMANEKRGPLFSAGFSDGLVKLFDQRIPGKYSCVSTLTEHKSYIVNVSMPASLGGKTVVSGSSTGEIKFWQHSYECSSTTIHNNDVISSFSVHEYAPLIACGSQNQRIKIMNFTGEDVCTIRYHDGFLGQRIGPVSCVAFHPYNILMGAGATDSIISIYNGDSKSKSNVDW.

The span at 1-19 shows a compositional bias: polar residues; sequence MDKSYNFSSSNLANSSGLH. Disordered stretches follow at residues 1–100, 281–356, 970–1005, 1018–1058, and 1072–1091; these read MDKS…NATP, FSGN…SSSS, NISR…VGTN, INNG…NGLG, and SGLG…SMNS. Positions 20-67 are enriched in low complexity; that stretch reads NSINSNNVNGVNNINNNNNNNNNNNNNNNNNNNNENVNNHNNVSNISN. Over residues 89 to 98 the composition is skewed to basic and acidic residues; the sequence is FGEERHKDNA. Low complexity predominate over residues 282–356; sequence SGNNQNNNQN…NQSGSSSSSS (75 aa). Polar residues predominate over residues 982–1004; it reads PTKTKLGNQRSPILTSSTNNVGT. The span at 1082–1091 shows a compositional bias: low complexity; sequence MSQSISSMNS. WD repeat units lie at residues 1184 to 1225, 1229 to 1270, 1284 to 1328, 1332 to 1371, 1377 to 1418, 1420 to 1460, and 1468 to 1507; these read PNGQ…NTFN, MSGT…DTLK, TGND…GVQD, GTES…KYSC, EHKS…SSTT, HNND…CTIR, and QRIG…KSNV.

This sequence belongs to the WD repeat RAPTOR family. Part of a complex, TORC1, consisting of tor, raptor and lst8.

The sequence is that of Protein raptor homolog (raptor) from Dictyostelium discoideum (Social amoeba).